A 129-amino-acid chain; its full sequence is Small ribosomal subunit protein uS12 (129 aa).

This sequence belongs to the universal ribosomal protein uS12 family. Part of the 30S ribosomal subunit. Contacts proteins S8 and S17. May interact with IF1 in the 30S initiation complex.

Its function is as follows. With S4 and S5 plays an important role in translational accuracy. In terms of biological role, interacts with and stabilizes bases of the 16S rRNA that are involved in tRNA selection in the A site and with the mRNA backbone. Located at the interface of the 30S and 50S subunits, it traverses the body of the 30S subunit contacting proteins on the other side and probably holding the rRNA structure together. The combined cluster of proteins S8, S12 and S17 appears to hold together the shoulder and platform of the 30S subunit. This chain is Small ribosomal subunit protein uS12, found in Rickettsia typhi (strain ATCC VR-144 / Wilmington).